A 496-amino-acid polypeptide reads, in one-letter code: Ganglioside-induced differentiation-associated protein 2 (496 aa).

Residues 25–48 (EEGEDVPDGGRKDVPDGGSHSPFP) form a disordered region. A Macro domain is found at 44–224 (HSPFPYRKDI…TYRRLLPLYF (181 aa)). Positions 329–483 (DLSDIAALKA…FVLDYDAREN (155 aa)) constitute a CRAL-TRIO domain.

It belongs to the GDAP2 family.

This chain is Ganglioside-induced differentiation-associated protein 2, found in Xenopus laevis (African clawed frog).